A 360-amino-acid polypeptide reads, in one-letter code: uncharacterized protein (360 aa).

It to P.multocida PM1082.

This is an uncharacterized protein from Pasteurella multocida (strain Pm70).